The following is an 896-amino-acid chain: MKTQDIAQRWLDFFAAKGHTVVPSASLISADPSILFNIAGMVPFVPYLSGREKAPYDRATSVQKCIRTADIDEVGKTVRHGTFFQMCGNFSFGDYFKEGAITFAWELLTSSIADGGYGLDPSRLWATVYVDGTEKDEEARAIWRDKIGIPEERIQGTGKADNFWSTGQPGPGGPCSEIYYDLGAKYGQEGGPIVDETRYIEIWNLVFMQYQLSAVRSKTDFDIAGDLPNRNIDTGLGLERLAMILQGVENLYETDQVRPVLDAAAELAGKDYTSTVDPADPHHADDVRLRVVADHIRSALMLIADGVAPSNEGRGYVLRRLIRRAVRAMRLMGVEKPCLPALLPVSREAMKGFYPAVEEDFERISRIAYAEEKSFLRTIASGTARLDEAVTESKAKNQPLSGAEAFALHDTYGFPIDLTLEMAAEAGLAVDETGFRALMLEQRQRAQADSREKKSGHADLSAFNELLAQGQTVFTGYSELDGESAIRGLLSGGQPIAKASQGQEIELVLAETPFYAEAGGQAADTGLISGDGFVIEVLDVQRPVKDLSVHKAIVREGEVAIGASVRAAVDRERRHAAEQAHTGTHIVHAALHQILGPEALQRGSFNKAGYLRFDFAWGEGLSTATRSEIEEVANIAIRNNYSVQTTEMPIDEAKALGAMALFGENYGSRVRVVEIDGAWSRELCGGTHVDTTSRIGSLTLLGEQSVGYGNRRVEAFVGMDAFRHLAAERALVSELTEIMKVPSTQLADRIGATLAKLRATEKELDRLRKAQLTAAAGELTTKAQQVGKTRLLTHDVGQIGGADELRSLALDLRERLGSEAAVVALTGESNDRPMVLVATNEAARAAGVKAGALVKLAAGVLGGGGGGKDDVAQGGGSNVGQIPAALAAINQAVAAL.

Residues histidine 581, histidine 585, cysteine 684, and histidine 688 each contribute to the Zn(2+) site.

Belongs to the class-II aminoacyl-tRNA synthetase family. It depends on Zn(2+) as a cofactor.

It is found in the cytoplasm. The catalysed reaction is tRNA(Ala) + L-alanine + ATP = L-alanyl-tRNA(Ala) + AMP + diphosphate. In terms of biological role, catalyzes the attachment of alanine to tRNA(Ala) in a two-step reaction: alanine is first activated by ATP to form Ala-AMP and then transferred to the acceptor end of tRNA(Ala). Also edits incorrectly charged Ser-tRNA(Ala) and Gly-tRNA(Ala) via its editing domain. In Renibacterium salmoninarum (strain ATCC 33209 / DSM 20767 / JCM 11484 / NBRC 15589 / NCIMB 2235), this protein is Alanine--tRNA ligase.